A 453-amino-acid chain; its full sequence is Chromosomal replication initiator protein DnaA (453 aa).

The interval 1 to 78 is domain I, interacts with DnaA modulators; that stretch reads MTENEQLFWN…FEIFNAEITA (78 aa). The interval 78–112 is domain II; the sequence is ANYVSNDLHLQETSFSNYQQSSNEVNTLPIRKIDS. The interval 113–331 is domain III, AAA+ region; it reads NLKEKYTFAN…GALKNISLVA (219 aa). ATP contacts are provided by glycine 157, glycine 159, lysine 160, and threonine 161. A domain IV, binds dsDNA region spans residues 332 to 453; sequence DFKHAKTITV…EIETIKNKIR (122 aa).

The protein belongs to the DnaA family. Oligomerizes as a right-handed, spiral filament on DNA at oriC.

The protein localises to the cytoplasm. In terms of biological role, plays an essential role in the initiation and regulation of chromosomal replication. ATP-DnaA binds to the origin of replication (oriC) to initiate formation of the DNA replication initiation complex once per cell cycle. Binds the DnaA box (a 9 base pair repeat at the origin) and separates the double-stranded (ds)DNA. Forms a right-handed helical filament on oriC DNA; dsDNA binds to the exterior of the filament while single-stranded (ss)DNA is stabiized in the filament's interior. The ATP-DnaA-oriC complex binds and stabilizes one strand of the AT-rich DNA unwinding element (DUE), permitting loading of DNA polymerase. After initiation quickly degrades to an ADP-DnaA complex that is not apt for DNA replication. Binds acidic phospholipids. This chain is Chromosomal replication initiator protein DnaA, found in Streptococcus agalactiae serotype Ia (strain ATCC 27591 / A909 / CDC SS700).